The following is a 536-amino-acid chain: Nuclear hormone receptor family member nhr-7 (536 aa).

Residues 6-82 (NRICAVCGDT…VGMNPDYVRP (77 aa)) constitute a DNA-binding region (nuclear receptor). NR C4-type zinc fingers lie at residues 9–29 (CAVC…CFGC) and 46–70 (CRFE…FRKC). Residues 155 to 378 (ADRSLARKTG…PFHKILTDII (224 aa)) enclose the NR LBD domain. Residues 427-465 (SPCQISAPPPPQQQYTDYSQMPSTSSYPANSSPFQSPYR) are disordered. Positions 439–465 (QQYTDYSQMPSTSSYPANSSPFQSPYR) are enriched in polar residues.

It belongs to the nuclear hormone receptor family.

It is found in the nucleus. Functionally, orphan nuclear receptor. The chain is Nuclear hormone receptor family member nhr-7 (nhr-7) from Caenorhabditis elegans.